Here is a 468-residue protein sequence, read N- to C-terminus: PE family protein PE3 (468 aa).

The PE domain occupies 1 to 92 (MSYVIAAPEM…AGAAYAQAEA (92 aa)). One can recognise a PE-PPE domain in the interval 154 to 375 (PVAQYTPEQW…DLRVLVDLGY (222 aa)).

It belongs to the mycobacterial PE family.

The protein resides in the secreted. The protein localises to the cell wall. Plays significant roles in mycobacterial persistence during infection and modulates host immune response. The polypeptide is PE family protein PE3 (Mycobacterium tuberculosis (strain ATCC 25618 / H37Rv)).